We begin with the raw amino-acid sequence, 584 residues long: Chaperonin GroEL 1 (584 aa).

Residues 29 to 32, 86 to 90, glycine 413, and aspartate 492 each bind ATP; these read TIGP and DGTTT. The segment at 523 to 542 is disordered; it reads EPEAAAPGGPGGDPMGGMGG. Residues 530–542 show a composition bias toward gly residues; that stretch reads GGPGGDPMGGMGG.

It belongs to the chaperonin (HSP60) family. As to quaternary structure, forms a cylinder of 14 subunits composed of two heptameric rings stacked back-to-back. Interacts with the co-chaperonin GroES.

The protein localises to the cytoplasm. It carries out the reaction ATP + H2O + a folded polypeptide = ADP + phosphate + an unfolded polypeptide.. Functionally, together with its co-chaperonin GroES, plays an essential role in assisting protein folding. The GroEL-GroES system forms a nano-cage that allows encapsulation of the non-native substrate proteins and provides a physical environment optimized to promote and accelerate protein folding. This chain is Chaperonin GroEL 1, found in Prochlorococcus marinus (strain MIT 9312).